Here is a 119-residue protein sequence, read N- to C-terminus: MVQENKNFATAKAKSIRVSPRKLNLVAAFIRNMKVSEALVQLTFSPKRIAKVVKTCLQSAIANAENNLGLDIDRLVVTKATVGKALVMKRVMPRAKGRATRINKFFSNLYITVTEKEDN.

The protein belongs to the universal ribosomal protein uL22 family. As to quaternary structure, part of the 50S ribosomal subunit.

Functionally, this protein binds specifically to 23S rRNA; its binding is stimulated by other ribosomal proteins, e.g. L4, L17, and L20. It is important during the early stages of 50S assembly. It makes multiple contacts with different domains of the 23S rRNA in the assembled 50S subunit and ribosome. Its function is as follows. The globular domain of the protein is located near the polypeptide exit tunnel on the outside of the subunit, while an extended beta-hairpin is found that lines the wall of the exit tunnel in the center of the 70S ribosome. The protein is Large ribosomal subunit protein uL22 of Rickettsia canadensis (strain McKiel).